A 290-amino-acid polypeptide reads, in one-letter code: Ribosomal RNA small subunit methyltransferase A (290 aa).

S-adenosyl-L-methionine-binding residues include N27, L29, G54, E75, D100, and N125.

This sequence belongs to the class I-like SAM-binding methyltransferase superfamily. rRNA adenine N(6)-methyltransferase family. RsmA subfamily.

The protein localises to the cytoplasm. The catalysed reaction is adenosine(1518)/adenosine(1519) in 16S rRNA + 4 S-adenosyl-L-methionine = N(6)-dimethyladenosine(1518)/N(6)-dimethyladenosine(1519) in 16S rRNA + 4 S-adenosyl-L-homocysteine + 4 H(+). Its function is as follows. Specifically dimethylates two adjacent adenosines (A1518 and A1519) in the loop of a conserved hairpin near the 3'-end of 16S rRNA in the 30S particle. May play a critical role in biogenesis of 30S subunits. The polypeptide is Ribosomal RNA small subunit methyltransferase A (Streptococcus pneumoniae (strain JJA)).